Here is a 367-residue protein sequence, read N- to C-terminus: Germination protease (367 aa).

Positions 1 to 13 (MEEQQIPFQVRTD) are excised as a propeptide. The tract at residues 267–287 (KDDPSKSLTPAGMSFGNRKLT) is disordered.

It belongs to the peptidase A25 family. As to quaternary structure, homotetramer. In terms of processing, autoproteolytically processed. The inactive tetrameric zymogen termed p46 autoprocesses to a smaller form termed p41, which is active only during spore germination.

The enzyme catalyses Endopeptidase action with P4 Glu or Asp, P1 preferably Glu &gt; Asp, P1' hydrophobic and P2' Ala.. Initiates the rapid degradation of small, acid-soluble proteins during spore germination. The chain is Germination protease from Oceanobacillus iheyensis (strain DSM 14371 / CIP 107618 / JCM 11309 / KCTC 3954 / HTE831).